A 760-amino-acid polypeptide reads, in one-letter code: Catalase-peroxidase (760 aa).

The tract at residues 1–22 (MSQGECPVKKVPNVAGSGTRNT) is disordered. The tryptophyl-tyrosyl-methioninium (Trp-Tyr) (with M-268) cross-link spans 93–242 (WHSAGTYRVT…LAAAHMGLIY (150 aa)). Residue His94 is the Proton acceptor of the active site. A disordered region spans residues 206–226 (KGEGIMDGDQHKTDKSEPHTS). Residues 213–226 (GDQHKTDKSEPHTS) are compositionally biased toward basic and acidic residues. A cross-link (tryptophyl-tyrosyl-methioninium (Tyr-Met) (with W-93)) is located at residues 242-268 (YVNPEGPEGIPDPVAAAHDIRTTFGRM). His283 contributes to the heme b binding site.

It belongs to the peroxidase family. Peroxidase/catalase subfamily. In terms of assembly, homodimer or homotetramer. The cofactor is heme b. Post-translationally, formation of the three residue Trp-Tyr-Met cross-link is important for the catalase, but not the peroxidase activity of the enzyme.

The protein localises to the cytoplasm. The catalysed reaction is H2O2 + AH2 = A + 2 H2O. It carries out the reaction 2 H2O2 = O2 + 2 H2O. Functionally, bifunctional enzyme with both catalase and broad-spectrum peroxidase activity. This Pyrenophora tritici-repentis (strain Pt-1C-BFP) (Wheat tan spot fungus) protein is Catalase-peroxidase.